Reading from the N-terminus, the 93-residue chain is Small ribosomal subunit protein uS19 (93 aa).

Belongs to the universal ribosomal protein uS19 family.

Its function is as follows. Protein S19 forms a complex with S13 that binds strongly to the 16S ribosomal RNA. This is Small ribosomal subunit protein uS19 from Limosilactobacillus fermentum (strain NBRC 3956 / LMG 18251) (Lactobacillus fermentum).